Here is a 436-residue protein sequence, read N- to C-terminus: 3-ketoacyl-CoA thiolase (436 aa).

The Acyl-thioester intermediate role is filled by Cys-99. Active-site proton acceptor residues include His-392 and Cys-422.

The protein belongs to the thiolase-like superfamily. Thiolase family. Heterotetramer of two alpha chains (FadJ) and two beta chains (FadI).

The protein localises to the cytoplasm. The enzyme catalyses an acyl-CoA + acetyl-CoA = a 3-oxoacyl-CoA + CoA. It functions in the pathway lipid metabolism; fatty acid beta-oxidation. Its function is as follows. Catalyzes the final step of fatty acid oxidation in which acetyl-CoA is released and the CoA ester of a fatty acid two carbons shorter is formed. The protein is 3-ketoacyl-CoA thiolase of Salmonella choleraesuis (strain SC-B67).